Reading from the N-terminus, the 209-residue chain is Ion-translocating oxidoreductase complex subunit G (209 aa).

At 1 to 8 (MLTAIRKN) the chain is on the cytoplasmic side. The chain crosses the membrane as a helical span at residues 9–29 (GLILAVFACVSTGLVALTYAL). Over 30–209 (TAEQIQQQEQ…HNQPNPCEGQ (180 aa)) the chain is Periplasmic. T175 carries the FMN phosphoryl threonine modification.

This sequence belongs to the RnfG family. In terms of assembly, the complex is composed of six subunits: RnfA, RnfB, RnfC, RnfD, RnfE and RnfG. The cofactor is FMN.

The protein localises to the cell inner membrane. Its function is as follows. Part of a membrane-bound complex that couples electron transfer with translocation of ions across the membrane. The polypeptide is Ion-translocating oxidoreductase complex subunit G (Vibrio cholerae serotype O1 (strain ATCC 39541 / Classical Ogawa 395 / O395)).